The sequence spans 399 residues: Glucose-1-phosphate adenylyltransferase (399 aa).

Residues tyrosine 100, glycine 165, 180–181, and serine 191 each bind alpha-D-glucose 1-phosphate; that span reads EK.

This sequence belongs to the bacterial/plant glucose-1-phosphate adenylyltransferase family. Homotetramer.

The enzyme catalyses alpha-D-glucose 1-phosphate + ATP + H(+) = ADP-alpha-D-glucose + diphosphate. It functions in the pathway glycan biosynthesis; glycogen biosynthesis. Functionally, involved in the biosynthesis of ADP-glucose, a building block required for the elongation reactions to produce glycogen. Catalyzes the reaction between ATP and alpha-D-glucose 1-phosphate (G1P) to produce pyrophosphate and ADP-Glc. This is Glucose-1-phosphate adenylyltransferase from Desulforamulus reducens (strain ATCC BAA-1160 / DSM 100696 / MI-1) (Desulfotomaculum reducens).